A 625-amino-acid chain; its full sequence is Putative xanthine/uracil permease C887.17 (625 aa).

10 helical membrane passes run 49–69, 107–127, 154–174, 192–212, 246–263, 328–348, 369–389, 406–426, 429–449, and 465–485; these read AGLT…TILV, AAIS…PVGM, EALL…VIGL, AGIG…LGVI, MWVG…LMMY, FAIA…GTLY, VAYI…CSPV, GILG…APIF, IPVW…MKST, and ITIA…AGII. Residues 595–625 are disordered; sequence EAVGESESFSNRQQDFRTPYAGIDMDTDDRI.

Belongs to the nucleobase:cation symporter-2 (NCS2) (TC 2.A.40) family. Azg-like subfamily.

It is found in the golgi apparatus membrane. The polypeptide is Putative xanthine/uracil permease C887.17 (Schizosaccharomyces pombe (strain 972 / ATCC 24843) (Fission yeast)).